The chain runs to 857 residues: Putative serine/threonine-protein kinase receptor (857 aa).

The first 32 residues, 1–32 (MKGARNIYHHSYMSFLLVFVVMILIHPALSIY), serve as a signal peptide directing secretion. Topologically, residues 33–446 (INTLSSTESL…IAKKRNASGK (414 aa)) are extracellular. The region spanning 35–155 (TLSSTESLTI…SNNDASEYLW (121 aa)) is the Bulb-type lectin domain. 6 N-linked (GlcNAc...) asparagine glycosylation sites follow: Asn-47, Asn-120, Asn-196, Asn-260, Asn-389, and Asn-442. Positions 350–433 (CSGDGFTRMK…DGQDLYVRLA (84 aa)) constitute a PAN domain. 2 cysteine pairs are disulfide-bonded: Cys-380–Cys-405 and Cys-388–Cys-390. The helical transmembrane segment at 447 to 466 (IISLTVGVSVLLLLIMFCLW) threads the bilayer. Over 467-857 (KRKQKRAKAS…QYTCSVIDAR (391 aa)) the chain is Cytoplasmic. A Protein kinase domain is found at 528–779 (FSSCNKLGQG…PSIFQPQEVL (252 aa)). ATP is bound by residues 534 to 542 (LGQGGFGIV) and Lys-556. The Proton acceptor role is filled by Asp-653.

It belongs to the protein kinase superfamily. Ser/Thr protein kinase family. As to expression, predominantly in the pistil and anther.

Its subcellular location is the membrane. The enzyme catalyses L-seryl-[protein] + ATP = O-phospho-L-seryl-[protein] + ADP + H(+). It catalyses the reaction L-threonyl-[protein] + ATP = O-phospho-L-threonyl-[protein] + ADP + H(+). In terms of biological role, involved in sporophytic self-incompatibility system (the inability of flowering plants to achieve self-fertilization), probably acting in combination with S-locus-specific glycoproteins. Interaction with a ligand in the extracellular domain triggers the protein kinase activity of the cytoplasmic domain. The protein is Putative serine/threonine-protein kinase receptor (SRK6) of Brassica oleracea var. viridis (Flowering kale).